The following is a 161-amino-acid chain: Troponin C, slow skeletal and cardiac muscles (161 aa).

Met-1 is modified (N-acetylmethionine). EF-hand domains lie at 16–51 (QKNE…LGQN), 52–87 (PTPE…CMKD), 92–127 (KSEE…TGET), and 128–161 (ITED…KGVE). Asp-65, Asp-67, Ser-69, Thr-71, and Glu-76 together coordinate Ca(2+). Ser-98 carries the phosphoserine modification. Residues Asp-105, Asn-107, Asp-109, Tyr-111, Glu-116, Asp-141, Asn-143, Asp-145, Arg-147, and Glu-152 each coordinate Ca(2+).

The protein belongs to the troponin C family.

In terms of biological role, troponin is the central regulatory protein of striated muscle contraction. Tn consists of three components: Tn-I which is the inhibitor of actomyosin ATPase, Tn-T which contains the binding site for tropomyosin and Tn-C. The binding of calcium to Tn-C abolishes the inhibitory action of Tn on actin filaments. This is Troponin C, slow skeletal and cardiac muscles (Tnnc1) from Mus musculus (Mouse).